Reading from the N-terminus, the 418-residue chain is Voltage-gated ClC-type chloride channel ClcB (418 aa).

10 helical membrane-spanning segments follow: residues 5 to 25 (LLIA…FRHA), 54 to 74 (LLTP…WQKF), 146 to 166 (LWIA…PLAG), 168 to 188 (LFIA…PVII), 222 to 242 (ALII…LTLM), 258 to 278 (WQLA…PAVW), 291 to 311 (APPL…AVLA), 316 to 336 (GAPG…GMLY), 352 to 372 (LLLG…APIM), and 380 to 400 (MTGE…ASVI).

This sequence belongs to the chloride channel (TC 2.A.49) family. ClcB subfamily.

Its subcellular location is the cell inner membrane. In terms of biological role, probably acts as an electrical shunt for an outwardly-directed proton pump that is linked to amino acid decarboxylation, as part of the extreme acid resistance (XAR) response. In Escherichia coli (strain ATCC 8739 / DSM 1576 / NBRC 3972 / NCIMB 8545 / WDCM 00012 / Crooks), this protein is Voltage-gated ClC-type chloride channel ClcB.